The chain runs to 375 residues: Growth/differentiation factor 8 (375 aa).

Positions 1–23 (MQKLQIYVYIYLFMLIVAGPVDL) are cleaved as a signal peptide. Residues 24–266 (NENSEQKENV…VTDTPKRSRR (243 aa)) constitute a propeptide that is removed on maturation. A glycan (N-linked (GlcNAc...) asparagine) is linked at Asn-71. 4 disulfide bridges follow: Cys-272/Cys-282, Cys-281/Cys-340, Cys-309/Cys-372, and Cys-313/Cys-374.

Belongs to the TGF-beta family. Homodimer; disulfide-linked. Interacts with WFIKKN2, leading to inhibit its activity. Interacts with FSTL3. Synthesized as large precursor molecule that undergoes proteolytic cleavage to generate an N-terminal propeptide and a disulfide linked C-terminal dimer, which is the biologically active molecule. The circulating form consists of a latent complex of the C-terminal dimer and other proteins, including its propeptide, which maintain the C-terminal dimer in a latent, inactive state. Ligand activation requires additional cleavage of the prodomain by a tolloid-like metalloproteinase.

It localises to the secreted. In terms of biological role, acts specifically as a negative regulator of skeletal muscle growth. The sequence is that of Growth/differentiation factor 8 (MSTN) from Sus scrofa (Pig).